Reading from the N-terminus, the 1119-residue chain is Protein translocase subunit SecA (1119 aa).

Residues Gln-177, 195-199 (GEGKT), and Asp-692 contribute to the ATP site. Residues 1025–1081 (APSIHEARQTKSKEKVETRKEEIPNMDERAAQSRAAGNTQRQQPEVTETIVRDRPKI) form a disordered region. Residues 1029–1055 (HEARQTKSKEKVETRKEEIPNMDERAA) are compositionally biased toward basic and acidic residues. Polar residues predominate over residues 1059–1070 (AAGNTQRQQPEV).

This sequence belongs to the SecA family. In terms of assembly, monomer and homodimer. Part of the essential Sec protein translocation apparatus which comprises SecA, SecYEG and auxiliary proteins SecDF. Other proteins may also be involved.

It localises to the cell inner membrane. Its subcellular location is the cytoplasm. The enzyme catalyses ATP + H2O + cellular proteinSide 1 = ADP + phosphate + cellular proteinSide 2.. Its function is as follows. Part of the Sec protein translocase complex. Interacts with the SecYEG preprotein conducting channel. Has a central role in coupling the hydrolysis of ATP to the transfer of proteins into and across the cell membrane, serving as an ATP-driven molecular motor driving the stepwise translocation of polypeptide chains across the membrane. The polypeptide is Protein translocase subunit SecA (Christiangramia forsetii (strain DSM 17595 / CGMCC 1.15422 / KT0803) (Gramella forsetii)).